The following is a 222-amino-acid chain: MNNSVTNTARLLWAGLRSLLVLTVVTGVLYPLAVTGVAQGLFSDQANGSEIKADGKVVGSSLIGQAYNLPLKKGQETPEPDLKWFQGRPANGLGTNSVNTQYSLILSGATNRSGDNADLIKWVKDAKAAVVKDNSTADHKVKPSDVPADAVTSSGSGLDPDISPEYADLQVHRIAEQNHLAVAPVQKLVDEHTDGRTLGFIGEPRVNVLELNIALKELVATS.

The chain crosses the membrane as a helical span at residues tryptophan 13–threonine 35. The disordered stretch occupies residues threonine 136–isoleucine 162.

The protein belongs to the KdpC family. As to quaternary structure, the system is composed of three essential subunits: KdpA, KdpB and KdpC.

The protein resides in the cell membrane. In terms of biological role, part of the high-affinity ATP-driven potassium transport (or Kdp) system, which catalyzes the hydrolysis of ATP coupled with the electrogenic transport of potassium into the cytoplasm. This subunit acts as a catalytic chaperone that increases the ATP-binding affinity of the ATP-hydrolyzing subunit KdpB by the formation of a transient KdpB/KdpC/ATP ternary complex. This is Potassium-transporting ATPase KdpC subunit from Streptomyces avermitilis (strain ATCC 31267 / DSM 46492 / JCM 5070 / NBRC 14893 / NCIMB 12804 / NRRL 8165 / MA-4680).